A 358-amino-acid polypeptide reads, in one-letter code: Alanine racemase (358 aa).

Lys35 (proton acceptor; specific for D-alanine) is an active-site residue. At Lys35 the chain carries N6-(pyridoxal phosphate)lysine. Arg130 provides a ligand contact to substrate. Tyr255 functions as the Proton acceptor; specific for L-alanine in the catalytic mechanism. Met303 is a binding site for substrate.

The protein belongs to the alanine racemase family. Pyridoxal 5'-phosphate serves as cofactor.

The enzyme catalyses L-alanine = D-alanine. The protein operates within amino-acid biosynthesis; D-alanine biosynthesis; D-alanine from L-alanine: step 1/1. Functionally, catalyzes the interconversion of L-alanine and D-alanine. May also act on other amino acids. This Shewanella loihica (strain ATCC BAA-1088 / PV-4) protein is Alanine racemase (alr).